The chain runs to 873 residues: MHEQYQPLEIETQAQNYWKEHQSFLVRELPDKEKFYCLSMFPYPSGKLHMGHVRNYTIGDVISRYHRMQGRNVLQPMGWDAFGMPAENAAMKNNVAPAAWTYDNIAYMKSQLDSLGLAIDWSREVTTCKPDYYRWEQWLFTRLFEKGVIYRKNGTVNWDPVDQTVLANEQVIDGRGWRSGALIEKREIPMYYFKITAYAEELLESLDNLPGWPEQVKTMQRNWIGKSRGMEIGFPYDQASIGHAGQLKVFTTRPDTLMGATYVAVAAEHPLATQAAQNDPQLQAFIDECKRGGVAEADIATQEKKGMATSLFVEHPLTGDKLPVWVANYVLMNYGEGAVMAVPGHDERDFEFANKYGLPIRQVIAKVEGDNDFESSVWKEWYGAKDESVLTVNSGKYDNLGYQAAFDAIGADLEAKGLGQARTQFRLRDWGISRQRYWGCPIPIIHCEACGDVPVPADQLPVVLPEDVVPDGSGSPLAKMPEFYECNCPKCGQPAKRETDTMDTFVESSWYFARYACPQFEGGMLDRKAADYWLPVDQYIGGIEHAILHLLYARFFHKLMRDEGLVGSDEPFKNLLTQGMVVADTYYRTTANGGKDWFNPADVEVERDAKAKVVGARLKSDGQPVEIGGTEKMSKSKNNGVDPQSMIDQYGADTCRLFMMFASPPDMSLEWSDAGVEGANRFLRRVWRLAHAHVSAGLPGALDVAALSDAQKQVRRAIHLAIRQASQDVGQHHKFNTAIAAVMTLMNVLEKAPNQDAQDRALIQEGLETVVLLLAPITPHICHVLWGQLGHAEAVIDARWPSVDESALVQDTLQLVVQVNGKLRGHIDVAASASREDVEAAARANENVLRFTEGLSIRKVIVVPGKLVNIVAN.

The 'HIGH' region signature appears at 42–52; the sequence is PYPSGKLHMGH. The interval 624-643 is disordered; that stretch reads PVEIGGTEKMSKSKNNGVDP. The 'KMSKS' region motif lies at 632-636; that stretch reads KMSKS. Lysine 635 contacts ATP.

Belongs to the class-I aminoacyl-tRNA synthetase family.

Its subcellular location is the cytoplasm. The catalysed reaction is tRNA(Leu) + L-leucine + ATP = L-leucyl-tRNA(Leu) + AMP + diphosphate. This is Leucine--tRNA ligase from Pseudomonas aeruginosa (strain ATCC 15692 / DSM 22644 / CIP 104116 / JCM 14847 / LMG 12228 / 1C / PRS 101 / PAO1).